The chain runs to 902 residues: Calcium-activated chloride channel regulator 3A-1 (902 aa).

The first 21 residues, 1–21 (MVPGLQVLLFLTLHLLQNTES), serve as a signal peptide directing secretion. The metalloprotease domain stretch occupies residues 45–199 (DERLIPSIKE…RITGTNVVHN (155 aa)). A glycan (N-linked (GlcNAc...) asparagine) is linked at Asn-75. His-155 contacts Zn(2+). Glu-156 is an active-site residue. The Zn(2+) site is built by His-159 and Asp-166. In terms of domain architecture, VWFA spans 308–476 (VVCLVLDKSG…NSLIDAFSRI (169 aa)). 7 N-linked (GlcNAc...) asparagine glycosylation sites follow: Asn-504, Asn-515, Asn-630, Asn-687, Asn-697, Asn-809, and Asn-814.

The protein belongs to the CLCR family. In terms of assembly, part of a complex composed of complement component C3, CLCA1/CLCA3, A2ML1/OH and ALB/serum albumin. In terms of processing, glycosylated. The 130-kDa product is autoproteolytically processed by the metalloprotease domain and yields two subunits, a 90-kDa protein and a group of 32- to 38-kDa proteins. The cleavage is necessary for calcium-activated chloride channel (CaCC) activation activity. In terms of tissue distribution, highly expressed in skin and spleen, and at lower levels in kidney and liver. Also detected in lung and brain. Not detected in lung or brain. In lung, localizes to respiratory epithelia of the bronchi and trachea and the submucosal glands.

The protein resides in the cell membrane. Functionally, plays a role in modulating chloride current across the plasma membrane in a calcium-dependent manner. The chain is Calcium-activated chloride channel regulator 3A-1 from Mus musculus (Mouse).